Reading from the N-terminus, the 872-residue chain is Alanine--tRNA ligase (872 aa).

Zn(2+) contacts are provided by histidine 567, histidine 571, cysteine 669, and histidine 673.

It belongs to the class-II aminoacyl-tRNA synthetase family. It depends on Zn(2+) as a cofactor.

The protein localises to the cytoplasm. It carries out the reaction tRNA(Ala) + L-alanine + ATP = L-alanyl-tRNA(Ala) + AMP + diphosphate. In terms of biological role, catalyzes the attachment of alanine to tRNA(Ala) in a two-step reaction: alanine is first activated by ATP to form Ala-AMP and then transferred to the acceptor end of tRNA(Ala). Also edits incorrectly charged Ser-tRNA(Ala) and Gly-tRNA(Ala) via its editing domain. This is Alanine--tRNA ligase from Streptococcus suis (strain 98HAH33).